The chain runs to 262 residues: Tethering factor for nuclear proteasome cut8 (262 aa).

Belongs to the cut8/STS1 family. As to quaternary structure, binds the proteasome. In terms of processing, the N-terminal part (residues 1 to 72) is polyubiquitinated by rhp6, which is required for the interaction with the proteasome.

It localises to the nucleus envelope. Functionally, together with nucleoporin alm1, tethers the proteasome to the nuclear envelope. Involved in ubiquitin-mediated protein degradation and facilitates the degradation of nuclear proteins like mitotic cyclin and cut2. Required for normal progression of anaphase. This Schizosaccharomyces pombe (strain 972 / ATCC 24843) (Fission yeast) protein is Tethering factor for nuclear proteasome cut8.